The sequence spans 336 residues: Transcription initiation factor IIB (336 aa).

A TFIIB-type zinc finger spans residues 41-72; sequence QKLRCPICGNTVFIEDAERGQIVCASCGYVLM. Residues Cys-45, Cys-48, Cys-64, and Cys-67 each contribute to the Zn(2+) site. 2 consecutive repeat copies span residues 152 to 235 and 246 to 327.

It belongs to the TFIIB family.

Its function is as follows. Stabilizes TBP binding to an archaeal box-A promoter. Also responsible for recruiting RNA polymerase II to the pre-initiation complex (DNA-TBP-TFIIB). This chain is Transcription initiation factor IIB, found in Caldivirga maquilingensis (strain ATCC 700844 / DSM 13496 / JCM 10307 / IC-167).